Here is a 38-residue protein sequence, read N- to C-terminus: Potassium channel toxin alpha-KTx 6.4 (38 aa).

Disulfide bonds link cysteine 6–cysteine 27, cysteine 12–cysteine 32, cysteine 16–cysteine 34, and cysteine 22–cysteine 37.

This sequence belongs to the short scorpion toxin superfamily. Potassium channel inhibitor family. Alpha-KTx 06 subfamily. Expressed by the venom gland.

The protein resides in the secreted. In terms of biological role, potently, completely and reversibly blocks voltage-gated potassium channel Kv1.2/KCNA2 and Shaker B (Sh). Also blocks small conductance (SK) calcium-activated potassium channel (KCNN). The protein is Potassium channel toxin alpha-KTx 6.4 of Pandinus imperator (Emperor scorpion).